Reading from the N-terminus, the 233-residue chain is Large ribosomal subunit protein uL1 (233 aa).

Belongs to the universal ribosomal protein uL1 family. In terms of assembly, part of the 50S ribosomal subunit.

In terms of biological role, binds directly to 23S rRNA. The L1 stalk is quite mobile in the ribosome, and is involved in E site tRNA release. Functionally, protein L1 is also a translational repressor protein, it controls the translation of the L11 operon by binding to its mRNA. This chain is Large ribosomal subunit protein uL1, found in Campylobacter curvus (strain 525.92).